Here is a 112-residue protein sequence, read N- to C-terminus: MISLRVLLVILWLQLSWVWSQRKEVEQDPGPFNVPEGATVAFNCTYSNSASQSFFWYRQDCRKEPKLLMSVYSSGNEDGRFTAQLNRASQYISLLIRDSKLSDSATYLCVVN.

The first 20 residues, 1–20, serve as a signal peptide directing secretion; sequence MISLRVLLVILWLQLSWVWS. Residues 23-112 form the Ig-like domain; that stretch reads KEVEQDPGPF…DSATYLCVVN (90 aa). An N-linked (GlcNAc...) asparagine glycan is attached at Asn43. Residues Cys44 and Cys109 are joined by a disulfide bond.

Alpha-beta TR is a heterodimer composed of an alpha and beta chain; disulfide-linked. The alpha-beta TR is associated with the transmembrane signaling CD3 coreceptor proteins to form the TR-CD3 (TcR or TCR). The assembly of alpha-beta TR heterodimers with CD3 occurs in the endoplasmic reticulum where a single alpha-beta TR heterodimer associates with one CD3D-CD3E heterodimer, one CD3G-CD3E heterodimer and one CD247 homodimer forming a stable octameric structure. CD3D-CD3E and CD3G-CD3E heterodimers preferentially associate with TR alpha and TR beta chains, respectively. The association of the CD247 homodimer is the last step of TcR assembly in the endoplasmic reticulum and is required for transport to the cell surface.

It localises to the cell membrane. In terms of biological role, v region of the variable domain of T cell receptor (TR) alpha chain that participates in the antigen recognition. Alpha-beta T cell receptors are antigen specific receptors which are essential to the immune response and are present on the cell surface of T lymphocytes. Recognize peptide-major histocompatibility (MH) (pMH) complexes that are displayed by antigen presenting cells (APC), a prerequisite for efficient T cell adaptive immunity against pathogens. Binding of alpha-beta TR to pMH complex initiates TR-CD3 clustering on the cell surface and intracellular activation of LCK that phosphorylates the ITAM motifs of CD3G, CD3D, CD3E and CD247 enabling the recruitment of ZAP70. In turn ZAP70 phosphorylates LAT, which recruits numerous signaling molecules to form the LAT signalosome. The LAT signalosome propagates signal branching to three major signaling pathways, the calcium, the mitogen-activated protein kinase (MAPK) kinase and the nuclear factor NF-kappa-B (NF-kB) pathways, leading to the mobilization of transcription factors that are critical for gene expression and essential for T cell growth and differentiation. The T cell repertoire is generated in the thymus, by V-(D)-J rearrangement. This repertoire is then shaped by intrathymic selection events to generate a peripheral T cell pool of self-MH restricted, non-autoaggressive T cells. Post-thymic interaction of alpha-beta TR with the pMH complexes shapes TR structural and functional avidity. In Homo sapiens (Human), this protein is T cell receptor alpha variable 12-1.